The chain runs to 253 residues: Oxidoreductase AOL_s00215g277 (253 aa).

Residues 181–203 (FFGYWLTVILGYYIGSLLGYQPF) traverse the membrane as a helical segment.

Belongs to the oxidoreductase OpS7 family.

Its subcellular location is the membrane. The protein operates within secondary metabolite biosynthesis; terpenoid biosynthesis. In terms of biological role, oxidoreductase; part of the gene cluster that mediates the biosynthesis of sesquiterpenyl epoxy-cyclohexenoids (SECs) such as anthrobotrisins and arthrosporols, metabolites that possess a novel hybrid carbon skeleton consisting of a polyketide-derived epoxycyclohexenol combined with a terpenoid-derived monocyclic sesquiterpenol substructure (PKS-PTS hybrid). The SEC pathway plays an important role for fungal soil colonization via decreasing fungal nematode-capturing ability. Within the pathway, the oxidoreductase AOL_s00215g277 seems to play a role in the farnesylation step of toluquinol to produce farnesyl hydroquinone, the hybrid precursor for biosynthesis of SECs. The pathway begins with the biosynthesis of 6-methylsalicylic acid (6-MSA), the first precursor of the polyketide-derived epoxycyclohexenol in arthrosporols, by the polyketide synthase (PKS) AOL_s00215g283 via condensation of 1 acetate and 3 malonate units. The 6-methylsalicylic acid decarboxylase AOL_s00215g281 then catalyzes the decarboxylation of 6-methylsalicylic acid to yield m-cresol. The cytochrome P450 monooxygenase AOL_s00215g282 further oxidizes m-cresol to yield toluquinol. With the assistance of the oxidoreductase AOL_s00215g277, the polyprenyl transferase AOL_s00215g276 catalyzes the farnesylation of toluquinol to produce farnesyl hydroquinone, the hybrid precursor for biosynthesis of SECs. Farnesyl hydroquinone undergoes epoxidation and then subsequent dehydrogenation to form farnesyl epoxy-quinone, the first and simplest SEC. The cytochrome P450 monooxygenase AOL_s00215g278 and the FAD-dependent monooxygenase AOL_s00215g279 might be involved in the oxygenation of the phenol moiety, most likely in the epoxy formation. The cytochrome P450 monooxygenases AOL_s00215g274 and AOL_s00215g280 are involved in specific regional ketone reductions at respectively C-4 and C-1 of farnesyl epoxy-quinone PubMed:33823587. The protein is Oxidoreductase AOL_s00215g277 of Arthrobotrys oligospora (strain ATCC 24927 / CBS 115.81 / DSM 1491) (Nematode-trapping fungus).